The primary structure comprises 284 residues: Anaerobic dimethyl sulfoxide reductase chain YnfH (284 aa).

Residues 1-9 (MGNGWHEWP) are Periplasmic-facing. A helical membrane pass occupies residues 10–30 (LVIFTVLGQCVVGALIVSGIG). Residues 31–45 (WFAAKNDADRQRIVR) lie on the Cytoplasmic side of the membrane. Residues 46-66 (GMFFLWLLMGVGFIASVMHLG) traverse the membrane as a helical segment. The Periplasmic portion of the chain corresponds to 67–86 (SPLRAFNSLNRIGASGLSNE). A helical transmembrane segment spans residues 87 to 107 (IAAGSIFFAVGGLWWLVAVIG). Over 108–115 (KMPQALGK) the chain is Cytoplasmic. A helical transmembrane segment spans residues 116-136 (LWLLFSMALGVIFVWMMTCVY). Topologically, residues 137 to 148 (QIDTVPTWHNGY) are periplasmic. A helical transmembrane segment spans residues 149-169 (TTLAFFLTVLLSGPILAAAIL). The Cytoplasmic segment spans residues 170–180 (RAARVTFNTTP). Residues 181–201 (FAIISVLALIACAGVIVLQGL) form a helical membrane-spanning segment. Residues 202–222 (SLASIHSSVQQASALVPDYAS) are Periplasmic-facing. A helical transmembrane segment spans residues 223–243 (LQVWRVVLLCAGLGCWLCPLI). The Cytoplasmic portion of the chain corresponds to 244 to 250 (RRREPHV). A helical membrane pass occupies residues 251–271 (AGLILGLILILGGEMIGRVLF). Topologically, residues 272–284 (YGLHMTVGMAIAG) are periplasmic.

The protein belongs to the DmsC family. As to quaternary structure, the complex consists of three subunits: YnfF, the reductase; YnfG, an electron transfer protein, and YnfH, a membrane anchor protein.

The protein resides in the cell inner membrane. Its function is as follows. Terminal reductase during anaerobic growth on various sulfoxide and N-oxide compounds. The C subunit anchors the other two subunits to the membrane and stabilize the catalytic subunits. The sequence is that of Anaerobic dimethyl sulfoxide reductase chain YnfH (ynfH) from Escherichia coli (strain K12).